A 577-amino-acid polypeptide reads, in one-letter code: Arginine--tRNA ligase (577 aa).

Positions 122–132 match the 'HIGH' region motif; that stretch reads PNVAKEMHVGH.

The protein belongs to the class-I aminoacyl-tRNA synthetase family. In terms of assembly, monomer.

The protein resides in the cytoplasm. It carries out the reaction tRNA(Arg) + L-arginine + ATP = L-arginyl-tRNA(Arg) + AMP + diphosphate. The polypeptide is Arginine--tRNA ligase (Edwardsiella ictaluri (strain 93-146)).